The following is a 326-amino-acid chain: MGNADLRSLAALSDVSFDDLGGSVVAVDAHNWLYRYLTTTVKFTSESKYTTSNGEEVANLIGVVQGLPKFFEHDMTPVFVFDGAVTDLKDDEVEKRREQRQKYESELEAAREAGDSTRVAKLDSRTQRLTDTIVDTTRDLLELLDVPIVDAPAEGEGQASVMARRGDVDYVGTEDYDALLFGAPMTLRQITSKGDPELMDFAATLEHHDLTWEQLVDAAILMGTDFNEGISGIGPKTAVKDLHEHGDLYTVLAARGEHIDHADRIRDLFLDPAATDDYEIPDSIEPDIDAARTFVTDQWEVDADEVARGFERIDDSVVQTGLDRWA.

The N-domain stretch occupies residues 1 to 100 (MGNADLRSLA…DEVEKRREQR (100 aa)). Residues Asp28, Asp82, Glu154, Glu156, Asp175, Asp177, and Asp225 each coordinate Mg(2+). Residues 118–246 (RVAKLDSRTQ…TAVKDLHEHG (129 aa)) are I-domain. The interval 318–326 (VQTGLDRWA) is interaction with PCNA.

Belongs to the XPG/RAD2 endonuclease family. FEN1 subfamily. In terms of assembly, interacts with PCNA. PCNA stimulates the nuclease activity without altering cleavage specificity. Mg(2+) is required as a cofactor.

Its function is as follows. Structure-specific nuclease with 5'-flap endonuclease and 5'-3' exonuclease activities involved in DNA replication and repair. During DNA replication, cleaves the 5'-overhanging flap structure that is generated by displacement synthesis when DNA polymerase encounters the 5'-end of a downstream Okazaki fragment. Binds the unpaired 3'-DNA end and kinks the DNA to facilitate 5' cleavage specificity. Cleaves one nucleotide into the double-stranded DNA from the junction in flap DNA, leaving a nick for ligation. Also involved in the base excision repair (BER) pathway. Acts as a genome stabilization factor that prevents flaps from equilibrating into structures that lead to duplications and deletions. Also possesses 5'-3' exonuclease activity on nicked or gapped double-stranded DNA. This Haloarcula marismortui (strain ATCC 43049 / DSM 3752 / JCM 8966 / VKM B-1809) (Halobacterium marismortui) protein is Flap endonuclease 1.